The chain runs to 103 residues: Pilin (103 aa).

Positions 1-30 (MYRFACRTLMLAACILATGVAGLGVGAQSA) are cleaved as a signal peptide. Over residues 61 to 76 (HDDFHRDSDGPDHSRD) the composition is skewed to basic and acidic residues. The segment at 61–103 (HDDFHRDSDGPDHSRDYPGPILEGPVLDDPGAAPPPPAAGGGA) is disordered. The segment covering 92 to 103 (AAPPPPAAGGGA) has biased composition (pro residues).

It belongs to the mycobacterial pilin family. Forms a homomer composed of subunits assembled in a large structure.

It localises to the fimbrium. In terms of biological role, structural subunit of pili, which are thin, flexible, coiled-coil, aggregative fibers. Mediates adhesion to the extracellular matrix, an event that would facilitate direct interaction with the host epithelium during infection in the lung or other tissues. In Mycobacterium bovis (strain ATCC BAA-935 / AF2122/97), this protein is Pilin (mtp).